We begin with the raw amino-acid sequence, 32 residues long: Photosystem II reaction center protein T (32 aa).

A helical transmembrane segment spans residues 3 to 23 (ALVYTFLLIGTLVVIFFAIFF).

Belongs to the PsbT family. In terms of assembly, PSII is composed of 1 copy each of membrane proteins PsbA, PsbB, PsbC, PsbD, PsbE, PsbF, PsbH, PsbI, PsbJ, PsbK, PsbL, PsbM, PsbT, PsbX, PsbY, PsbZ, Psb30/Ycf12, at least 3 peripheral proteins of the oxygen-evolving complex and a large number of cofactors. It forms dimeric complexes.

It is found in the plastid. The protein resides in the chloroplast thylakoid membrane. In terms of biological role, found at the monomer-monomer interface of the photosystem II (PS II) dimer, plays a role in assembly and dimerization of PSII. PSII is a light-driven water plastoquinone oxidoreductase, using light energy to abstract electrons from H(2)O, generating a proton gradient subsequently used for ATP formation. The chain is Photosystem II reaction center protein T from Emiliania huxleyi (Coccolithophore).